A 518-amino-acid polypeptide reads, in one-letter code: MTRSIAAAYRAGELPAFFRLPAGDLAAAASEPRLDVDRAALADALRAYHRDLGTLDSGVEAQLTRLAHPASRVVVTGQQAGLLTGPAYSVHKGADAALLARQLDREDAPVIPVYWVASQDHDAAEVASTTLLDHAEELHRLTLDLPQGVPVGRVPWQPEWTAAVLKLLDRFDTAPEYRAAVRARVEQAIRGGGSFADVFARLIHGLLAPTGLLVLDPLHPALAHLMAPTLARELACPLEGPARIEAAARRLEAVGFPPQLRRPAGATNLFLEEEDGQRRLLRFDGRQFHTDTRLYTREELLAVLEAGPTRLTPAAGLRPVVQDALLPTLAFVVGPGEIAYGAQLREVYELHGLRQPLLWPRLSVTWLEPNVVRLLSRLQATAAEVQADPEGVLGRALARERGAAAASAERLAALDAELRALTAELAALDPTLEGAAERTRARTTARVAHLQTLALRALARQEDERARQLTRLKRHLLPNGVPQEREMNFLTFLLKHGEEPLRKLLSLPPGAQAEVPLS.

The stretch at Ala404–Arg474 forms a coiled coil.

The protein belongs to the BshC family.

The protein is Putative cysteine ligase BshC of Deinococcus geothermalis (strain DSM 11300 / CIP 105573 / AG-3a).